We begin with the raw amino-acid sequence, 269 residues long: Diaminopimelate epimerase (269 aa).

Residues asparagine 13, glutamine 47, and asparagine 65 each coordinate substrate. The active-site Proton donor is cysteine 74. Residues 75 to 76 (GN), asparagine 149, asparagine 182, and 200 to 201 (ER) contribute to the substrate site. The active-site Proton acceptor is the cysteine 209. 210–211 (GT) is a binding site for substrate.

The protein belongs to the diaminopimelate epimerase family. As to quaternary structure, homodimer.

It localises to the cytoplasm. It catalyses the reaction (2S,6S)-2,6-diaminopimelate = meso-2,6-diaminopimelate. It functions in the pathway amino-acid biosynthesis; L-lysine biosynthesis via DAP pathway; DL-2,6-diaminopimelate from LL-2,6-diaminopimelate: step 1/1. Catalyzes the stereoinversion of LL-2,6-diaminopimelate (L,L-DAP) to meso-diaminopimelate (meso-DAP), a precursor of L-lysine and an essential component of the bacterial peptidoglycan. The protein is Diaminopimelate epimerase of Erythrobacter litoralis (strain HTCC2594).